Reading from the N-terminus, the 186-residue chain is Biphenyl dioxygenase subunit beta (186 aa).

It belongs to the bacterial ring-hydroxylating dioxygenase beta subunit family. In terms of assembly, heterohexamer consisting of 3 BphA subunits and 3 BphE subunits. A ferredoxin (BphF) and a ferredoxin reductase (BphG) must be present to obtain activity.

It carries out the reaction biphenyl + NADH + O2 + H(+) = (2R,3S)-3-phenylcyclohexa-3,5-diene-1,2-diol + NAD(+). It functions in the pathway xenobiotic degradation; biphenyl degradation; 2-hydroxy-2,4-pentadienoate and benzoate from biphenyl: step 1/4. In terms of biological role, the beta subunit may be responsible for the substrate specificity of the enzyme. This chain is Biphenyl dioxygenase subunit beta (bphE), found in Comamonas testosteroni (Pseudomonas testosteroni).